A 135-amino-acid chain; its full sequence is uncharacterized protein (135 aa).

The disordered stretch occupies residues methionine 1–histidine 36.

Belongs to the transposase 8 family.

This is an uncharacterized protein from Sinorhizobium fredii (strain NBRC 101917 / NGR234).